Reading from the N-terminus, the 193-residue chain is MLGVLELLLLGAAWLAGPARGQNETEPIVLEGKCLVVCDSNPTSDPTGTALGISVRSGSAKVAFSAIRSTNHEPSEMSNRTMIIYFDQVLVNIGNNFDSERSTFIAPRKGIYSFNFHVVKVYNRQTIQVSLMLNGWPVISAFAGDQDVTREAASNGVLIQMEKGDRAYLKLERGNLMGGWKYSTFSGFLVFPL.

Positions M1–G21 are cleaved as a signal peptide. N23 is a glycosylation site (N-linked (GlcNAc...) asparagine). The essential for interaction with NRXN1 and linker of two C1q trimers into disulfide-linked hexamers stretch occupies residues C34 to C38. One can recognise a C1q domain in the interval S57–L193. Residues V62–L193 form a necessary for interaction with CBLN3, and homotrimerization region. N79 carries an N-linked (GlcNAc...) asparagine glycan. The tract at residues Y122–D147 is essential for interaction with GRID2.

As to quaternary structure, homohexamer; disulfide-linked homotrimers. The trimers associate via N-terminal cysteine residues to form disulfide-linked hexamers. May form oligomers with CBLN2, CBLN3 AND CBLN4 prior to secretion. Once secreted, does not interact with other CBLN family members. Interacts with GRID1. Interacts with NRXN1 and NRXN2 long (alpha) and short (beta) isoforms produced by alternative promoter usage. Competes with NLGN1 for NRXN1-binding. Weakly interacts with NRXN3 short isoform and not at all with NRXN3 long isoform. Interacts (via C1q domain) with GRID2; GRID2-binding is calcium-independent; CBLN1 hexamers anchor GRID2 N-terminal domain dimers to monomeric NRXN1 isoform beta; promotes synaptogenesis and mediates the D-Serine-dependent long term depression signals and AMPA receptor endocytosis. Interacts with OTOL1. In terms of processing, the proteolytic processing to yield cerebellin seems to occur either prior to the secretion by presynaptic neurons and subsequent oligomerization or in some other location after release of the mature protein. Sialoglycoprotein. In the Purkinje cells postsynaptic structures. In the cerebellum, cerebellin is much less abundant than [des-Ser1]-cerebellin.

Its subcellular location is the secreted. The protein resides in the postsynaptic cell membrane. Required for synapse integrity and synaptic plasticity. During cerebellar synapse formation, essential for the matching and maintenance of pre- and post-synaptic elements at parallel fiber-Purkinje cell synapses, the establishment of the proper pattern of climbing fiber-Purkinje cell innervation, and induction of long-term depression at parallel fiber-Purkinje cell synapses. Plays a role as a synaptic organizer that acts bidirectionally on both pre- and post-synaptic components. On the one hand induces accumulation of synaptic vesicles in the pre-synaptic part by binding with NRXN1 and in other hand induces clustering of GRID2 and its associated proteins at the post-synaptic site through association of GRID2. NRXN1-CBLN1-GRID2 complex directly induces parallel fiber protrusions that encapsulate spines of Purkinje cells leading to accumulation of GRID2 and synaptic vesicles. Required for CBLN3 export from the endoplasmic reticulum and secretion. NRXN1-CBLN1-GRID2 complex mediates the D-Serine-dependent long term depression signals and AMPA receptor endocytosis. Essential for long-term maintenance but not establishment of excitatory synapses. Inhibits the formation and function of inhibitory GABAergic synapses in cerebellar Purkinje cells. In terms of biological role, the cerebellin peptide exerts neuromodulatory functions. Directly stimulates norepinephrine release via the adenylate cyclase/PKA-dependent signaling pathway; and indirectly enhances adrenocortical secretion in vivo, through a paracrine mechanism involving medullary catecholamine release. The sequence is that of Cerebellin-1 (CBLN1) from Homo sapiens (Human).